The following is a 368-amino-acid chain: N-acetylneuraminate epimerase (368 aa).

The first 19 residues, 1–19, serve as a signal peptide directing secretion; sequence MNKTITALAIIMASFAANA. Kelch repeat units follow at residues 40-84, 86-137, 139-173, 174-219, 222-265, 287-336, and 338-367; these read TVYI…AFID, NLYV…FVHN, KAYV…KINA, YYFD…VNKG, TWLI…VAGG, ENYQ…PWNN, and LLII…VTVQ. Catalysis depends on Glu228, which acts as the Proton acceptor.

The protein belongs to the NanM family. Homodimer.

The protein localises to the periplasm. It carries out the reaction N-acetyl-alpha-neuraminate = N-acetyl-beta-neuraminate. Converts alpha-N-acetylneuranimic acid (Neu5Ac) to the beta-anomer, accelerating the equilibrium between the alpha- and beta-anomers. Probably facilitates sialidase-negative bacteria to compete successfully for limited amounts of extracellular Neu5Ac, which is likely taken up in the beta-anomer. In addition, the rapid removal of sialic acid from solution might be advantageous to the bacterium to damp down host responses. The polypeptide is N-acetylneuraminate epimerase (Escherichia coli O139:H28 (strain E24377A / ETEC)).